We begin with the raw amino-acid sequence, 266 residues long: Translation initiation factor 2 subunit alpha (266 aa).

An S1 motif domain is found at 10–81 (GELVVGKIDE…SAQQIDLSIK (72 aa)). Residues 233 to 266 (AEDALEESADRAAKVVEQHGGSGQFHRERSEDDE) are disordered. Basic and acidic residues-rich tracts occupy residues 240–249 (SADRAAKVVE) and 257–266 (FHRERSEDDE).

This sequence belongs to the eIF-2-alpha family. Heterotrimer composed of an alpha, a beta and a gamma chain.

Its function is as follows. eIF-2 functions in the early steps of protein synthesis by forming a ternary complex with GTP and initiator tRNA. The chain is Translation initiation factor 2 subunit alpha from Haloarcula marismortui (strain ATCC 43049 / DSM 3752 / JCM 8966 / VKM B-1809) (Halobacterium marismortui).